The sequence spans 590 residues: Probable metalloendopeptidase G1-type (590 aa).

His-41 lines the Zn(2+) pocket. Residue Glu-44 is part of the active site. His-45 is a Zn(2+) binding site.

This sequence belongs to the peptidase M44 family. The cofactor is Zn(2+).

Functionally, seems to be involved in viral proteins maturation by cleavage at Ala-Gly-|-Xaa motifs. The sequence is that of Probable metalloendopeptidase G1-type (GP045L) from Oryctolagus cuniculus (Rabbit).